The chain runs to 66 residues: Phylloseptin-Az3 (66 aa).

Positions 1–22 (MAFLKKSLFLVLFLGLVSLSIC) are cleaved as a signal peptide. A propeptide spanning residues 23 to 44 (EEEKRETEEEEYNQEDDDKSEE) is cleaved from the precursor. At F65 the chain carries Phenylalanine amide.

As to expression, expressed by the skin glands.

The protein resides in the secreted. Has antimicrobial activity. The protein is Phylloseptin-Az3 of Pithecopus azureus (Orange-legged monkey tree frog).